We begin with the raw amino-acid sequence, 125 residues long: Small ribosomal subunit protein uS13 (125 aa).

Belongs to the universal ribosomal protein uS13 family. Part of the 30S ribosomal subunit. Forms a loose heterodimer with protein S19. Forms two bridges to the 50S subunit in the 70S ribosome.

Located at the top of the head of the 30S subunit, it contacts several helices of the 16S rRNA. In the 70S ribosome it contacts the 23S rRNA (bridge B1a) and protein L5 of the 50S subunit (bridge B1b), connecting the 2 subunits; these bridges are implicated in subunit movement. Contacts the tRNAs in the A and P-sites. The protein is Small ribosomal subunit protein uS13 of Rickettsia massiliae (strain Mtu5).